Here is a 236-residue protein sequence, read N- to C-terminus: ATP synthase subunit a (236 aa).

A run of 5 helical transmembrane segments spans residues 17 to 37 (LSDM…AVAA), 75 to 95 (FLTL…LGLP), 112 to 132 (DATV…YYGV), 174 to 194 (IYAG…YGVL), and 208 to 228 (FSIF…MVYM).

This sequence belongs to the ATPase A chain family. F-type ATPases have 2 components, CF(1) - the catalytic core - and CF(0) - the membrane proton channel. CF(1) has five subunits: alpha(3), beta(3), gamma(1), delta(1), epsilon(1). CF(0) has three main subunits: a(1), b(2) and c(9-12). The alpha and beta chains form an alternating ring which encloses part of the gamma chain. CF(1) is attached to CF(0) by a central stalk formed by the gamma and epsilon chains, while a peripheral stalk is formed by the delta and b chains.

Its subcellular location is the cell membrane. In terms of biological role, key component of the proton channel; it plays a direct role in the translocation of protons across the membrane. The chain is ATP synthase subunit a from Geobacillus stearothermophilus (Bacillus stearothermophilus).